Reading from the N-terminus, the 93-residue chain is Stromal cell-derived factor 1 (93 aa).

An N-terminal signal peptide occupies residues 1–21; sequence MDAKVVAVLALVLAALCISDG. Positions 22–23 match the Receptor activation motif motif; the sequence is KP. The tract at residues 29–33 is receptor and heparin binding; it reads RCPCR. Disulfide bonds link Cys30–Cys55 and Cys32–Cys71. 3 receptor binding regions span residues 39–41, 48–50, and 60–70; these read IAR, KIL, and VARLKNNNRQV. Heparin is bound by residues 41–51, Arg62, Gln69, and Lys85; that span reads RANVKHLKILN.

This sequence belongs to the intercrine alpha (chemokine CxC) family. In terms of assembly, monomer or homodimer; in equilibrium. Dimer formation is induced by non acidic pH and the presence of multivalent anions, and by binding to CXCR4 or heparin. Monomeric form is required for full chemotactic activity and resistance to ischemia/reperfusion injury, whereas the dimeric form acts as a partial agonist of CXCR4, stimulating Ca2+ mobilization but with no chemotactic activity and instead acts as a selective antagonist that blocks chemotaxis induced by the monomeric form. Interacts with the N-terminus of ACKR3. Interacts with integrin subunit ITGB3 (via the allosteric site (site 2)). Interacts with TNFAIP6 (via Link domain). As to expression, highest expression levels detected in kidney, liver, spleen and muscle. Isoform Alpha is expressed ubiquitously but at varying levels, while isoform Beta displays tissue-specific expression, with expression detected in kidney, liver, heart, spleen and muscle but not in lung, colon, brain, skin and stomach.

It localises to the secreted. Its function is as follows. Chemoattractant active on T-lymphocytes and monocytes but not neutrophils. Activates the C-X-C chemokine receptor CXCR4 to induce a rapid and transient rise in the level of intracellular calcium ions and chemotaxis. Also binds to atypical chemokine receptor ACKR3, which activates the beta-arrestin pathway and acts as a scavenger receptor for SDF-1. Binds to the allosteric site (site 2) of integrins and activates integrins ITGAV:ITGB3, ITGA4:ITGB1 and ITGA5:ITGB1 in a CXCR4-independent manner. Acts as a positive regulator of monocyte migration and a negative regulator of monocyte adhesion via the LYN kinase. Stimulates migration of monocytes and T-lymphocytes through its receptors, CXCR4 and ACKR3, and decreases monocyte adherence to surfaces coated with ICAM-1, a ligand for beta-2 integrins. SDF1A/CXCR4 signaling axis inhibits beta-2 integrin LFA-1 mediated adhesion of monocytes to ICAM-1 through LYN kinase. Plays a protective role after myocardial infarction. Induces down-regulation and internalization of ACKR3 expressed in various cells. Has several critical functions during embryonic development; required for B-cell lymphopoiesis, myelopoiesis in bone marrow and heart ventricular septum formation. Stimulates the proliferation of bone marrow-derived B-cell progenitors in the presence of IL7 as well as growth of stromal cell-dependent pre-B-cells. In Mus musculus (Mouse), this protein is Stromal cell-derived factor 1 (Cxcl12).